A 2244-amino-acid chain; its full sequence is Multifunctional protein ura1 (2244 aa).

The tract at residues 1–437 is GATase (Glutamine amidotransferase); sequence MSGLLPSLSS…GPRDTEFLFD (437 aa). A disordered region spans residues 16–44; sequence QSEALGMPRTHGPKPSENDPKEPTCSPSP. L-glutamine-binding residues include Ser-101, Gly-309, and Gly-311. A Glutamine amidotransferase type-1 domain is found at 264-449; that stretch reads RILVIDVGMK…IDVVKRSADA (186 aa). Cys-338 serves as the catalytic Nucleophile; for GATase activity. 4 residues coordinate L-glutamine: Gln-342, Asn-380, Gly-382, and Tyr-383. Catalysis depends on for GATase activity residues His-422 and Glu-424. Residues 438–477 are linker; the sequence is VFIDVVKRSADAKSLQPFKLPGGTIEENRSRHPLVDAKRV. The segment at 478–1014 is CPSase A; it reads LILGSGGLSI…VEHDIHFNDK (537 aa). Positions 478–1514 are CPSase (Carbamoyl phosphate synthase); sequence LILGSGGLSI…TNVKCAKLMI (1037 aa). The ATP site is built by Arg-594, Arg-634, Gly-640, Gly-641, Arg-671, Met-673, Glu-678, Gly-704, Ile-705, His-706, Gln-747, and Glu-761. Residues 598 to 790 form the ATP-grasp 1 domain; it reads ARAMDEINEK…LAFTAAKLGL (193 aa). The Mg(2+) site is built by Gln-747, Glu-761, and Asn-763. Residues Gln-747, Glu-761, and Asn-763 each contribute to the Mn(2+) site. The segment at 1015-1514 is CPSase B; that stretch reads GVMVLGSGVY…TNVKCAKLMI (500 aa). Phosphoserine is present on Ser-1119. Positions 1133 to 1324 constitute an ATP-grasp 2 domain; the sequence is SRMLDDIGVD…MISMATDVIM (192 aa). Residues Arg-1169, Lys-1208, Ile-1210, Glu-1215, Gly-1240, Val-1241, His-1242, Ser-1243, Gln-1283, and Glu-1295 each contribute to the ATP site. Mg(2+) is bound by residues Gln-1283, Glu-1295, and Asn-1297. Residues Gln-1283, Glu-1295, and Asn-1297 each contribute to the Mn(2+) site. An MGS-like domain is found at 1390–1552; that stretch reads FRLPKKNILI…INISAFLPEF (163 aa). The segment at 1515 to 1524 is linker; sequence EAICRNLDFS. The interval 1525–1853 is defective DHOase domain; sequence LSTVDFQSSF…FDGHDVFFDG (329 aa). The interval 1854–1935 is linker; that stretch reads ELNFEHTYGR…VQLINSSPFY (82 aa). Residues Ser-1881 and Ser-1885 each carry the phosphoserine modification. Residues 1936–2244 form an ATCase (Aspartate transcarbamylase) region; it reads RKHIISVHQV…CVMGATEVAN (309 aa). Positions 1988 and 1989 each coordinate carbamoyl phosphate. Residue Lys-2016 coordinates L-aspartate. Positions 2037, 2065, and 2068 each coordinate carbamoyl phosphate. L-aspartate contacts are provided by Arg-2098 and Arg-2160. Leu-2199 and Pro-2200 together coordinate carbamoyl phosphate.

In the N-terminal section; belongs to the CarA family. The protein in the 2nd section; belongs to the CarB family. It in the 3rd section; belongs to the metallo-dependent hydrolases superfamily. DHOase family. CAD subfamily. This sequence in the C-terminal section; belongs to the aspartate/ornithine carbamoyltransferase superfamily. ATCase family. The cofactor is Mg(2+). Mn(2+) is required as a cofactor.

It carries out the reaction hydrogencarbonate + L-glutamine + 2 ATP + H2O = carbamoyl phosphate + L-glutamate + 2 ADP + phosphate + 2 H(+). The catalysed reaction is L-glutamine + H2O = L-glutamate + NH4(+). The enzyme catalyses hydrogencarbonate + NH4(+) + 2 ATP = carbamoyl phosphate + 2 ADP + phosphate + 2 H(+). It catalyses the reaction carbamoyl phosphate + L-aspartate = N-carbamoyl-L-aspartate + phosphate + H(+). Its pathway is pyrimidine metabolism; UMP biosynthesis via de novo pathway; (S)-dihydroorotate from bicarbonate: step 1/3. The protein operates within pyrimidine metabolism; UMP biosynthesis via de novo pathway; (S)-dihydroorotate from bicarbonate: step 2/3. With respect to regulation, both CPSase and ATCase activities are feedback inhibited by the end product UTP. In terms of biological role, multifunctional protein that encodes the first 2 enzymatic activities of the de novo pyrimidine pathway: carbamoylphosphate synthetase (CPSase; EC 6.3.5.5) and aspartate transcarbamylase (ATCase; EC 2.1.3.2). The CPSase-function is accomplished in 2 steps, by a glutamine-dependent amidotransferase activity (GATase) that binds and cleaves glutamine to produce ammonia, followed by an ammonium-dependent carbamoyl phosphate synthetase, which reacts with the ammonia, hydrogencarbonate and ATP to form carbamoyl phosphate. The endogenously produced carbamoyl phosphate is sequestered and channeled to the ATCase active site. ATCase then catalyzes the formation of carbamoyl-L-aspartate from L-aspartate and carbamoyl phosphate. This is Multifunctional protein ura1 (ura1) from Schizosaccharomyces pombe (strain 972 / ATCC 24843) (Fission yeast).